Here is a 68-residue protein sequence, read N- to C-terminus: Large ribosomal subunit protein bL31 (68 aa).

Cysteine 17, cysteine 19, cysteine 37, and cysteine 40 together coordinate Zn(2+).

It belongs to the bacterial ribosomal protein bL31 family. Type A subfamily. Part of the 50S ribosomal subunit. Zn(2+) serves as cofactor.

Its function is as follows. Binds the 23S rRNA. The sequence is that of Large ribosomal subunit protein bL31 from Clostridium perfringens (strain ATCC 13124 / DSM 756 / JCM 1290 / NCIMB 6125 / NCTC 8237 / Type A).